The sequence spans 194 residues: Crossover junction endodeoxyribonuclease RuvC (194 aa).

Residues D8, E72, and D144 contribute to the active site. 3 residues coordinate Mg(2+): D8, E72, and D144.

It belongs to the RuvC family. In terms of assembly, homodimer which binds Holliday junction (HJ) DNA. The HJ becomes 2-fold symmetrical on binding to RuvC with unstacked arms; it has a different conformation from HJ DNA in complex with RuvA. In the full resolvosome a probable DNA-RuvA(4)-RuvB(12)-RuvC(2) complex forms which resolves the HJ. Requires Mg(2+) as cofactor.

It localises to the cytoplasm. The enzyme catalyses Endonucleolytic cleavage at a junction such as a reciprocal single-stranded crossover between two homologous DNA duplexes (Holliday junction).. The RuvA-RuvB-RuvC complex processes Holliday junction (HJ) DNA during genetic recombination and DNA repair. Endonuclease that resolves HJ intermediates. Cleaves cruciform DNA by making single-stranded nicks across the HJ at symmetrical positions within the homologous arms, yielding a 5'-phosphate and a 3'-hydroxyl group; requires a central core of homology in the junction. The consensus cleavage sequence is 5'-(A/T)TT(C/G)-3'. Cleavage occurs on the 3'-side of the TT dinucleotide at the point of strand exchange. HJ branch migration catalyzed by RuvA-RuvB allows RuvC to scan DNA until it finds its consensus sequence, where it cleaves and resolves the cruciform DNA. This chain is Crossover junction endodeoxyribonuclease RuvC, found in Psychrobacter arcticus (strain DSM 17307 / VKM B-2377 / 273-4).